The chain runs to 325 residues: UPF0285 protein Mbar_A0208 (325 aa).

Belongs to the UPF0285 family.

The protein is UPF0285 protein Mbar_A0208 of Methanosarcina barkeri (strain Fusaro / DSM 804).